A 386-amino-acid chain; its full sequence is uncharacterized protein (386 aa).

This sequence belongs to the mimivirus L17x/L18x family.

This is an uncharacterized protein from Acanthamoeba polyphaga mimivirus (APMV).